We begin with the raw amino-acid sequence, 1005 residues long: Increased rDNA silencing protein 4 (1005 aa).

Residues 1–18 (MSALSASLAAAAAAARAS) show a composition bias toward low complexity. 8 disordered regions span residues 1–170 (MSAL…PTPV), 183–219 (RAAA…QSSL), 239–258 (QSFA…GDFE), 272–350 (QSAA…KDAK), 402–587 (SPNF…TFSA), 602–624 (KRRR…SSPV), 657–682 (GNNG…LALT), and 735–776 (NKAT…HNDA). The segment covering 63 to 75 (VDTSVANTPAPQG) has biased composition (polar residues). Positions 76 to 86 (SSATSAAAAAA) are enriched in low complexity. Polar residues predominate over residues 111 to 126 (HRNSGESAKTPSSDSR). Positions 127-161 (PASTTSTIPVTPVSATTPSSTVAAAASAAAKRSST) are enriched in low complexity. The span at 204–219 (SPSNSVRSKRLSQSSL) shows a compositional bias: polar residues. The span at 246-258 (TDEDSPGEMGDFE) shows a compositional bias: acidic residues. 2 stretches are compositionally biased toward polar residues: residues 280-297 (RLSQ…QLQP) and 320-333 (SNAS…SLTN). Residues 408–419 (RPGEHFHNHQRE) show a composition bias toward basic and acidic residues. Polar residues-rich tracts occupy residues 451–466 (SIDT…TSPI) and 497–522 (LQQS…SIAS). 2 stretches are compositionally biased toward low complexity: residues 568 to 578 (SSSQSQRNSLQ) and 608 to 624 (ARTP…SSPV). Residues 763–776 (KFNEDKPWKHHNDA) are compositionally biased toward basic and acidic residues. One can recognise an EH domain in the interval 845–934 (MSGENIGNDD…PRVWGSVGRL (90 aa)). The tract at residues 942-1005 (QKEPKRNSAK…RRDKKRVGEA (64 aa)) is disordered. The segment covering 948 to 960 (NSAKRKARRKVRR) has biased composition (basic residues). A compositionally biased stretch (basic and acidic residues) spans 961-1005 (DRKELVRERERNEKERRKDEKKEKKDEKKDKKDDRRRDKKRVGEA).

The protein belongs to the IRS4 family.

Its function is as follows. Positive regulator of phosphatidylinositol 4,5-bisphosphate turnover and negatively regulates signaling through the cell integrity pathway. Involved in rDNA silencing. This Yarrowia lipolytica (strain CLIB 122 / E 150) (Yeast) protein is Increased rDNA silencing protein 4 (IRS4).